Consider the following 385-residue polypeptide: Homoserine O-succinyltransferase (385 aa).

An AB hydrolase-1 domain is found at Asn-45–Asp-355. Ser-151 acts as the Nucleophile in catalysis. Position 221 (Arg-221) interacts with substrate. Residues Asp-316 and His-349 contribute to the active site. Asp-350 provides a ligand contact to substrate.

Belongs to the AB hydrolase superfamily. MetX family. Homodimer.

The protein localises to the cytoplasm. It carries out the reaction L-homoserine + succinyl-CoA = O-succinyl-L-homoserine + CoA. Its pathway is amino-acid biosynthesis; L-methionine biosynthesis via de novo pathway; O-succinyl-L-homoserine from L-homoserine: step 1/1. Its function is as follows. Transfers a succinyl group from succinyl-CoA to L-homoserine, forming succinyl-L-homoserine. This is Homoserine O-succinyltransferase from Janthinobacterium sp. (strain Marseille) (Minibacterium massiliensis).